The chain runs to 463 residues: L-cystine uptake protein TcyP (463 aa).

The next 10 helical transmembrane spans lie at 3-23 (TLLV…LFVM), 34-54 (VFTA…IYGP), 73-93 (YVKL…LGAF), 105-125 (ISGL…AVGI), 184-204 (PTST…FLGV), 225-245 (IVMR…LAIM), 262-282 (MFVI…LLLL), 338-358 (LSIG…MMIA), 369-389 (VFII…AGVG), and 394-414 (FAAL…GLLI).

The protein belongs to the dicarboxylate/amino acid:cation symporter (DAACS) (TC 2.A.23) family.

The protein localises to the cell membrane. In terms of biological role, mediates uptake of L-cystine, the oxidized form of L-cysteine. Although it is more specific for L-cystine, it could also transport a much broader range of amino acids and sulfur compounds including S-methylcysteine. This Bacillus subtilis (strain 168) protein is L-cystine uptake protein TcyP (tcyP).